The primary structure comprises 905 residues: Alanine--tRNA ligase (905 aa).

Zn(2+) is bound by residues histidine 582, histidine 586, cysteine 687, and histidine 691.

The protein belongs to the class-II aminoacyl-tRNA synthetase family. It depends on Zn(2+) as a cofactor.

The protein localises to the cytoplasm. The enzyme catalyses tRNA(Ala) + L-alanine + ATP = L-alanyl-tRNA(Ala) + AMP + diphosphate. Its function is as follows. Catalyzes the attachment of alanine to tRNA(Ala) in a two-step reaction: alanine is first activated by ATP to form Ala-AMP and then transferred to the acceptor end of tRNA(Ala). Also edits incorrectly charged Ser-tRNA(Ala) and Gly-tRNA(Ala) via its editing domain. The sequence is that of Alanine--tRNA ligase from Mycoplasma mobile (strain ATCC 43663 / 163K / NCTC 11711) (Mesomycoplasma mobile).